We begin with the raw amino-acid sequence, 468 residues long: Tyramine receptor tyra-2 (468 aa).

Residues 1–23 (MMSSYVMSPVDETYTLFQILKGS) lie on the Extracellular side of the membrane. The chain crosses the membrane as a helical span at residues 24–43 (ALFLLVLWTIFANSLVFIVL). Over 44-54 (YKNPRLQTVPN) the chain is Cytoplasmic. A helical transmembrane segment spans residues 55–77 (LLVGNLAFSDLALGLIVLPLSSV). The Extracellular portion of the chain corresponds to 78–91 (YAIAGEWVFPDALC). Residues Cys-91 and Cys-177 are joined by a disulfide bond. Residues 92-114 (EVFVSADILCSTASIWNLSIVGL) traverse the membrane as a helical segment. The Cytoplasmic segment spans residues 115-134 (DRYWAITSPVAYMSKRNKRT). A helical membrane pass occupies residues 135-157 (AGIMILSVWISSALISLAPLLGW). Residues 158–186 (KQTAQTPNLIYEKNNTVRQCTFLDLPSYT) lie on the Extracellular side of the membrane. Asn-171 carries an N-linked (GlcNAc...) asparagine glycan. A helical membrane pass occupies residues 187-209 (VYSATGSFFIPTLLMFFVYFKIY). Topologically, residues 210–387 (QAFAKHRARQ…SAAKERRGVK (178 aa)) are cytoplasmic. The interval 252 to 306 (DEFAKEEEEEEDSESSGQVENGLGNGNDAIIEEDECEDEDSDEKRDDHTSMTTVT) is disordered. 2 stretches are compositionally biased toward acidic residues: residues 255–265 (AKEEEEEEDSE) and 281–292 (IIEEDECEDEDS). Residues 388–410 (VLGIILGCFTVCWAPFFTMYVLV) form a helical membrane-spanning segment. Residues 411-424 (QFCKDCSPNAHIEM) are Extracellular-facing. The chain crosses the membrane as a helical span at residues 425–444 (FITWLGYSNSAMNPIIYTVF). Topologically, residues 445–468 (NRDYQIALKRLFTSEKKPSSTSRV) are cytoplasmic.

Belongs to the G-protein coupled receptor 1 family. As to expression, expressed in the pharyngeal neurons, MCL/R and NSML/R and the AS group of amphidial sensory neurons, ASEL/R, AGSL/R, ASHL/R and ASIL/R.

The protein resides in the cell membrane. Its function is as follows. G-protein coupled receptor for tyramine, a known neurotransmitter and neuromodulator and direct precursor of octopamine. Expression in amphidial sensory neurons suggests a role in chemosensation. The protein is Tyramine receptor tyra-2 (tyra-2) of Caenorhabditis elegans.